A 251-amino-acid chain; its full sequence is uncharacterized protein (251 aa).

This is an uncharacterized protein from Bacillus subtilis (strain 168).